Consider the following 387-residue polypeptide: Type 2 DNA topoisomerase 6 subunit A (387 aa).

The 149-residue stretch at 12 to 160 (EARKKALAVF…MLILSKEKGK (149 aa)) folds into the Topo IIA-type catalytic domain. Residue tyrosine 106 is the O-(5'-phospho-DNA)-tyrosine intermediate of the active site. Residues glutamate 207 and aspartate 259 each coordinate Mg(2+).

The protein belongs to the TOP6A family. As to quaternary structure, homodimer. Heterotetramer of two Top6A and two Top6B chains. The cofactor is Mg(2+).

The enzyme catalyses ATP-dependent breakage, passage and rejoining of double-stranded DNA.. Its function is as follows. Relaxes both positive and negative superturns and exhibits a strong decatenase activity. The chain is Type 2 DNA topoisomerase 6 subunit A from Hyperthermus butylicus (strain DSM 5456 / JCM 9403 / PLM1-5).